Consider the following 74-residue polypeptide: MPKKGLHPQWYPEAKVICNGEVVMTVGSTKPELKVDVWSGNHPFFTGSQKIIDSEGRVEKFMRKYGMSGGKKAK.

This sequence belongs to the bacterial ribosomal protein bL31 family. Type A subfamily. Part of the 50S ribosomal subunit.

In terms of biological role, binds the 23S rRNA. The sequence is that of Large ribosomal subunit protein bL31 from Synechococcus sp. (strain JA-2-3B'a(2-13)) (Cyanobacteria bacterium Yellowstone B-Prime).